We begin with the raw amino-acid sequence, 255 residues long: 4-hydroxy-tetrahydrodipicolinate reductase (255 aa).

NAD(+) contacts are provided by residues 9–14 (GYRGKM), 89–91 (GTT), and 115–118 (APNF). The Proton donor/acceptor role is filled by H145. H146 lines the (S)-2,3,4,5-tetrahydrodipicolinate pocket. Residue K149 is the Proton donor of the active site. Residue 155 to 156 (GT) coordinates (S)-2,3,4,5-tetrahydrodipicolinate.

Belongs to the DapB family.

Its subcellular location is the cytoplasm. The catalysed reaction is (S)-2,3,4,5-tetrahydrodipicolinate + NAD(+) + H2O = (2S,4S)-4-hydroxy-2,3,4,5-tetrahydrodipicolinate + NADH + H(+). The enzyme catalyses (S)-2,3,4,5-tetrahydrodipicolinate + NADP(+) + H2O = (2S,4S)-4-hydroxy-2,3,4,5-tetrahydrodipicolinate + NADPH + H(+). The protein operates within amino-acid biosynthesis; L-lysine biosynthesis via DAP pathway; (S)-tetrahydrodipicolinate from L-aspartate: step 4/4. Catalyzes the conversion of 4-hydroxy-tetrahydrodipicolinate (HTPA) to tetrahydrodipicolinate. The chain is 4-hydroxy-tetrahydrodipicolinate reductase from Streptococcus uberis (strain ATCC BAA-854 / 0140J).